The primary structure comprises 324 residues: Fructose-1,6-bisphosphatase class 1 (324 aa).

4 residues coordinate Mg(2+): Glu88, Asp107, Leu109, and Asp110. Substrate contacts are provided by residues 110 to 113 (DGSS), Asn199, and Lys265. A Mg(2+)-binding site is contributed by Glu271.

It belongs to the FBPase class 1 family. As to quaternary structure, homotetramer. It depends on Mg(2+) as a cofactor.

The protein resides in the cytoplasm. The enzyme catalyses beta-D-fructose 1,6-bisphosphate + H2O = beta-D-fructose 6-phosphate + phosphate. It functions in the pathway carbohydrate biosynthesis; gluconeogenesis. This chain is Fructose-1,6-bisphosphatase class 1, found in Neisseria meningitidis serogroup C (strain 053442).